A 485-amino-acid chain; its full sequence is Glutamyl-tRNA(Gln) amidotransferase subunit A (485 aa).

Active-site charge relay system residues include lysine 78 and serine 153. The Acyl-ester intermediate role is filled by serine 177.

It belongs to the amidase family. GatA subfamily. In terms of assembly, heterotrimer of A, B and C subunits.

It carries out the reaction L-glutamyl-tRNA(Gln) + L-glutamine + ATP + H2O = L-glutaminyl-tRNA(Gln) + L-glutamate + ADP + phosphate + H(+). In terms of biological role, allows the formation of correctly charged Gln-tRNA(Gln) through the transamidation of misacylated Glu-tRNA(Gln) in organisms which lack glutaminyl-tRNA synthetase. The reaction takes place in the presence of glutamine and ATP through an activated gamma-phospho-Glu-tRNA(Gln). This is Glutamyl-tRNA(Gln) amidotransferase subunit A from Trichlorobacter lovleyi (strain ATCC BAA-1151 / DSM 17278 / SZ) (Geobacter lovleyi).